A 201-amino-acid chain; its full sequence is Recombination protein RecR (201 aa).

A C4-type zinc finger spans residues 60 to 75 (CSCCGNVDTIDPCTVC). Residues 83-178 (SVIIVVEDVS…KITRLAHGVP (96 aa)) enclose the Toprim domain.

The protein belongs to the RecR family.

Functionally, may play a role in DNA repair. It seems to be involved in an RecBC-independent recombinational process of DNA repair. It may act with RecF and RecO. The sequence is that of Recombination protein RecR from Agrobacterium fabrum (strain C58 / ATCC 33970) (Agrobacterium tumefaciens (strain C58)).